The chain runs to 229 residues: UPF0173 metal-dependent hydrolase SSP1060 (229 aa).

Belongs to the UPF0173 family.

This Staphylococcus saprophyticus subsp. saprophyticus (strain ATCC 15305 / DSM 20229 / NCIMB 8711 / NCTC 7292 / S-41) protein is UPF0173 metal-dependent hydrolase SSP1060.